Consider the following 453-residue polypeptide: O-glucose prenyltransferase PaPT (453 aa).

Position 95 to 96 (95 to 96) interacts with L-tryptophan; that stretch reads AP. Substrate-binding residues include lysine 210, tyrosine 212, arginine 279, lysine 281, tyrosine 283, tyrosine 368, and tyrosine 435.

Belongs to the tryptophan dimethylallyltransferase family.

It functions in the pathway mycotoxin biosynthesis. O-glucose prenyltransferase; part of the 2 gene clusters that mediate the biosynthesis of fusicoccins, diterpene glucosides that display phytohormone-like activity and function as potent activators of plasma membrane H(+)-ATPases in plants by modifying 14-3-3 proteins and cause the plant disease constriction canker. The first step in the pathway is performed by the fusicoccadiene synthase PaFS that possesses both prenyl transferase and terpene cyclase activity, converting isopentenyl diphosphate and dimethylallyl diphosphate into geranylgeranyl diphosphate (GGDP) and successively converting GGDP into fusicocca-2,10(14)-diene, a precursor for fusicoccin H. The second step is the oxidation at the C-8 position by the cytochrome P450 monooxygenase PaP450-2 to yield fusicocca-2,10(14)-diene-8-beta-ol. The cytochrome P450 monooxygenase PaP450-1 then catalyzes the hydroxylation at the C-16 position to produce fusicocca-2,10(14)-diene-8-beta,16-diol. The dioxygenase fc-dox then catalyzes the 16-oxydation of fusicocca-2,10(14)-diene-8-beta,16-diol to yield an aldehyde (8-beta-hydroxyfusicocca-1,10(14)-dien-16-al). The short-chain dehydrogenase/reductase fc-sdr catalyzes the reduction of the aldehyde to yield fusicocca-1,10(14)-diene-8-beta,16-diol. The next step is the hydroxylation at C-9 performed by the cytochrome P450 monooxygenase PaP450-3 that leads to fusicoccin H aglycon which is glycosylated to fusicoccin H by the O-glycosyltransferase PaGT. Hydroxylation at C-12 by the cytochrome P450 monooxygenase PaP450-4 leads then to the production of fusicoccin Q and is followed by methylation by the O-methyltransferase PaMT to yield fusicoccin P. Fusicoccin P is further converted to fusicoccin J via prenylation by the O-glucose prenyltransferase PaPT. Cytochrome P450 monooxygenase PaP450-5 then performs hydroxylation at C-19 to yield dideacetyl-fusicoccin A which is acetylated to 3'-O-deacetyl-fusicoccin A by the O-acetyltransferase PaAT-2. Finally, a another acetylation by the O-acetyltransferase PaAT-1 yields fusicoccin A. The chain is O-glucose prenyltransferase PaPT from Phomopsis amygdali (Fusicoccum amygdali).